Here is a 361-residue protein sequence, read N- to C-terminus: Probable galacturonosyltransferase-like 5 (361 aa).

The Cytoplasmic portion of the chain corresponds to 1–6 (MHWITR). A helical; Signal-anchor for type II membrane protein transmembrane segment spans residues 7-27 (FSAFFSAALAMILLSPSLQSF). At 28-361 (SPAAAIRSSH…APYDLYKHSH (334 aa)) the chain is on the lumenal side. Residues Asn-218 and Asn-234 are each glycosylated (N-linked (GlcNAc...) asparagine).

This sequence belongs to the glycosyltransferase 8 family.

Its subcellular location is the golgi apparatus membrane. The protein operates within glycan metabolism; pectin biosynthesis. In terms of biological role, may be involved in pectin and/or xylans biosynthesis in cell walls. The chain is Probable galacturonosyltransferase-like 5 (GATL5) from Arabidopsis thaliana (Mouse-ear cress).